The sequence spans 145 residues: Large ribosomal subunit protein uL16 (145 aa).

It belongs to the universal ribosomal protein uL16 family. In terms of assembly, part of the 50S ribosomal subunit.

Binds 23S rRNA and is also seen to make contacts with the A and possibly P site tRNAs. The chain is Large ribosomal subunit protein uL16 from Exiguobacterium sp. (strain ATCC BAA-1283 / AT1b).